The chain runs to 188 residues: Large ribosomal subunit protein eL18 (188 aa).

Residue lysine 119 forms a Glycyl lysine isopeptide (Lys-Gly) (interchain with G-Cter in SUMO2) linkage. Position 130 is a phosphoserine (serine 130). The tract at residues 151–188 (HFGKAPGTPHSHTKPYVRSKGRKFERARGRRASRGYKN) is disordered. Threonine 158 is subject to Phosphothreonine. 2 stretches are compositionally biased toward basic residues: residues 161-171 (SHTKPYVRSKG) and 178-188 (RGRRASRGYKN). A Glycyl lysine isopeptide (Lys-Gly) (interchain with G-Cter in SUMO2) cross-link involves residue lysine 164.

The protein belongs to the eukaryotic ribosomal protein eL18 family. In terms of assembly, component of the large ribosomal subunit.

The protein resides in the cytoplasm. The protein localises to the cytosol. Its subcellular location is the rough endoplasmic reticulum. Component of the large ribosomal subunit. The ribosome is a large ribonucleoprotein complex responsible for the synthesis of proteins in the cell. The polypeptide is Large ribosomal subunit protein eL18 (RPL18) (Homo sapiens (Human)).